We begin with the raw amino-acid sequence, 102 residues long: Integration host factor subunit alpha (102 aa).

This sequence belongs to the bacterial histone-like protein family. In terms of assembly, heterodimer of an alpha and a beta chain.

This protein is one of the two subunits of integration host factor, a specific DNA-binding protein that functions in genetic recombination as well as in transcriptional and translational control. This Buchnera aphidicola subsp. Acyrthosiphon pisum (strain 5A) protein is Integration host factor subunit alpha.